Consider the following 256-residue polypeptide: Small ribosomal subunit protein uS2 (256 aa).

This sequence belongs to the universal ribosomal protein uS2 family.

The protein is Small ribosomal subunit protein uS2 of Geotalea uraniireducens (strain Rf4) (Geobacter uraniireducens).